We begin with the raw amino-acid sequence, 456 residues long: tRNA modification GTPase MnmE (456 aa).

Residues Arg-23, Glu-85, and Arg-124 each coordinate (6S)-5-formyl-5,6,7,8-tetrahydrofolate. The TrmE-type G domain occupies 220 to 375 (GLRVLIFGKP…LVSAIQERFV (156 aa)). Asn-230 is a binding site for K(+). Residues 230-235 (NVGKSS), 249-255 (TDIPGTT), and 274-277 (DTAG) each bind GTP. Ser-234 contributes to the Mg(2+) binding site. K(+) contacts are provided by Thr-249, Ile-251, and Thr-254. Residue Thr-255 coordinates Mg(2+). Lys-456 contributes to the (6S)-5-formyl-5,6,7,8-tetrahydrofolate binding site.

Belongs to the TRAFAC class TrmE-Era-EngA-EngB-Septin-like GTPase superfamily. TrmE GTPase family. In terms of assembly, homodimer. Heterotetramer of two MnmE and two MnmG subunits. Requires K(+) as cofactor.

Its subcellular location is the cytoplasm. In terms of biological role, exhibits a very high intrinsic GTPase hydrolysis rate. Involved in the addition of a carboxymethylaminomethyl (cmnm) group at the wobble position (U34) of certain tRNAs, forming tRNA-cmnm(5)s(2)U34. The sequence is that of tRNA modification GTPase MnmE from Syntrophotalea carbinolica (strain DSM 2380 / NBRC 103641 / GraBd1) (Pelobacter carbinolicus).